Reading from the N-terminus, the 446-residue chain is Cytochrome P450 monooxygenase ptmP (446 aa).

A helical transmembrane segment spans residues 19-39 (VTVIWILMALVLLAYLILPNP). A heme-binding site is contributed by Cys385. The N-linked (GlcNAc...) asparagine glycan is linked to Asn430.

The protein belongs to the cytochrome P450 family. The cofactor is heme.

Its subcellular location is the membrane. Its pathway is secondary metabolite biosynthesis. Cytochrome P450 monooxygenase; part of the gene cluster that mediates the biosynthesis of the indole diterpenes penitrems. The geranylgeranyl diphosphate (GGPP) synthase ptmG catalyzes the first step in penitrem biosynthesis via conversion of farnesyl pyrophosphate and isopentyl pyrophosphate into geranylgeranyl pyrophosphate (GGPP). Condensation of indole-3-glycerol phosphate with GGPP by the prenyl transferase ptmC then forms 3-geranylgeranylindole (3-GGI). Epoxidation by the FAD-dependent monooxygenase ptmM leads to a epoxidized-GGI that is substrate of the terpene cyclase ptmB for cyclization to yield paspaline. Paspaline is subsequently converted to 13-desoxypaxilline by the cytochrome P450 monooxygenase ptmP, the latter being then converted to paxilline by the cytochrome P450 monooxygenase ptmQ. Paxilline is converted to beta-paxitriol via C-10 ketoreduction by the short-chain dehydrogenase ptmH which can be monoprenylated at the C-20 by the indole diterpene prenyltransferase ptmD. A two-step elimination (acetylation and elimination) process performed by the O-acetyltransferase ptmV and ptmI leads to the production of the prenylated form of penijanthine. The FAD-linked oxidoreductase ptmO then converts the prenylated form of penijanthine into PC-M5 which is in turn transformed into PC-M4 by the aromatic dimethylallyltransferase ptmE. Five sequential oxidative transformations performed by the cytochrome P450 monooxygenases ptmK, ptmU, ptmL, ptmN and ptmJ yield the various penitrem compounds. PtmK, ptmU and ptmM are involved in the formation of the key bicyclic ring of penitrem C via the formation of the intermediates secopenitrem D and penitrem D. PtmL catalyzes the epoxidation of penitrem D and C to yield penitrem B and F, respectively. PtmJ catalyzes the last benzylic hydroxylation to convert penitrem B to prenitrem E and penitrem F to penitrem A. In Penicillium ochrochloron, this protein is Cytochrome P450 monooxygenase ptmP.